Reading from the N-terminus, the 677-residue chain is uncharacterized protein (677 aa).

A disordered region spans residues 1-87 (MGRHSKPDPE…PTGAEPIAAA (87 aa)). The segment covering 17–29 (SDGHAAEQQHWED) has biased composition (basic and acidic residues). Positions 51-64 (GHYSAVGGYSASGS) are enriched in low complexity. 4 helical membrane passes run 115–135 (VSIG…GVIL), 192–212 (VAVA…IGKW), 313–333 (EAVA…IGAV), and 474–494 (ATLA…IMLD).

The protein localises to the cell membrane. This is an uncharacterized protein from Mycobacterium tuberculosis (strain CDC 1551 / Oshkosh).